Here is a 244-residue protein sequence, read N- to C-terminus: tRNA (guanine-N(1)-)-methyltransferase (244 aa).

Residues Gly-120 and 140–145 (IGDYIL) each bind S-adenosyl-L-methionine.

This sequence belongs to the RNA methyltransferase TrmD family. Homodimer.

It is found in the cytoplasm. It catalyses the reaction guanosine(37) in tRNA + S-adenosyl-L-methionine = N(1)-methylguanosine(37) in tRNA + S-adenosyl-L-homocysteine + H(+). Functionally, specifically methylates guanosine-37 in various tRNAs. The polypeptide is tRNA (guanine-N(1)-)-methyltransferase (Brucella canis (strain ATCC 23365 / NCTC 10854 / RM-666)).